The chain runs to 543 residues: Protein pbn1 (543 aa).

The Lumenal segment spans residues 1-503; that stretch reads MRRRITFVQR…KGFFQSKAIE (503 aa). An N-linked (GlcNAc...) asparagine glycan is attached at asparagine 409. The helical transmembrane segment at 504–524 threads the bilayer; sequence LGTMIVIGLGSLWVLWKLGAI. Topologically, residues 525–543 are cytoplasmic; sequence AWSSGTRPQRKSTKQKKSE.

Belongs to the PIGX family.

The protein localises to the endoplasmic reticulum membrane. It participates in glycolipid biosynthesis; glycosylphosphatidylinositol-anchor biosynthesis. Its function is as follows. Required for proper folding and/or the stability of a subset of proteins in the endoplasmic reticulum. Component of glycosylphosphatidylinositol-mannosyltransferase 1 which transfers the first of the 4 mannoses in the GPI-anchor precursors during GPI-anchor biosynthesis. Probably acts by stabilizing the mannosyltransferase gpi14. In Aspergillus oryzae (strain ATCC 42149 / RIB 40) (Yellow koji mold), this protein is Protein pbn1 (pbn1).